The primary structure comprises 571 residues: Penicillin-binding protein activator LpoA (571 aa).

A signal peptide spans 1–26 (MMTILLQHTHLKNRLMPFLLALFLAG). Residue cysteine 27 is the site of N-palmitoyl cysteine attachment. Cysteine 27 is lipidated: S-diacylglycerol cysteine.

This sequence belongs to the LpoA family. As to quaternary structure, interacts with PBP1a.

It is found in the cell outer membrane. Its function is as follows. Regulator of peptidoglycan synthesis that is essential for the function of penicillin-binding protein 1A (PBP1a). The sequence is that of Penicillin-binding protein activator LpoA from Pasteurella multocida (strain Pm70).